We begin with the raw amino-acid sequence, 71 residues long: MGMRMMVTVFLLVVLATTVVSLRSNRASDGRRGIVNKLNDLVPKYWTECCGRIGPHCSRCICPEVACPKNG.

A signal peptide spans 1-21 (MGMRMMVTVFLLVVLATTVVS). Residues 22–44 (LRSNRASDGRRGIVNKLNDLVPK) constitute a propeptide that is removed on maturation. Asn-70 bears the Asparagine amide mark.

Belongs to the conotoxin A superfamily. Contains 3 disulfide bonds. They are not indicated here, since framework IV presents two different connectivities (I-V, II-III, IV-VI and I-III, II-V, IV-VI). In terms of tissue distribution, expressed by the venom duct.

It localises to the secreted. This is Conotoxin Bu24 from Conus bullatus (Bubble cone).